The primary structure comprises 218 residues: Glutathione S-transferase Mu 1 (218 aa).

One can recognise a GST N-terminal domain in the interval 2–88 (PMILGYWDIR…YIARKHNLCG (87 aa)). Glutathione contacts are provided by residues 7–8 (YW), 43–46 (RSQW), lysine 50, 59–60 (NL), and 72–73 (QS). In terms of domain architecture, GST C-terminal spans 90-208 (TEEEMIRVDI…KSSRFLPGPL (119 aa)). Tyrosine 116 contributes to the substrate binding site.

The protein belongs to the GST superfamily. Mu family. As to quaternary structure, homodimer.

It is found in the cytoplasm. The catalysed reaction is RX + glutathione = an S-substituted glutathione + a halide anion + H(+). The enzyme catalyses prostaglandin A2 + glutathione = prostaglandin A2-S-(R)-glutathione. It carries out the reaction prostaglandin J2 + glutathione = prostaglandin J2-S-(R)-glutathione. It catalyses the reaction prostaglandin J2 + glutathione = prostaglandin J2-S-(S)-glutathione. The catalysed reaction is prostaglandin A2 + glutathione = prostaglandin A2-S-(S)-glutathione. The enzyme catalyses 11(S)-hydroxy-14(S),15(S)-epoxy-(5Z,8Z,12E)-eicosatrienoate + glutathione = (11S,15S)-dihydroxy-14(R)-S-glutathionyl-(5Z,8Z,12E)-eicosatrienoate. Functionally, conjugation of reduced glutathione to a wide number of exogenous and endogenous hydrophobic electrophiles. Protects against the thiol-mediated metal-catalyzed oxidative inactivation of enzymes. Involved in the formation of glutathione conjugates of both prostaglandin A2 (PGA2) and prostaglandin J2 (PGJ2). Participates in the formation of novel hepoxilin regioisomers. In Bos taurus (Bovine), this protein is Glutathione S-transferase Mu 1 (GSTM1).